A 577-amino-acid chain; its full sequence is Aspartate--tRNA(Asp/Asn) ligase (577 aa).

Glu171 contributes to the L-aspartate binding site. The tract at residues 195–198 (QLFK) is aspartate. Arg217 lines the L-aspartate pocket. Residues 217-219 (RDE) and Gln226 each bind ATP. His444 contacts L-aspartate. Glu474 provides a ligand contact to ATP. Arg481 contributes to the L-aspartate binding site. Residue 526–529 (GFDR) coordinates ATP.

This sequence belongs to the class-II aminoacyl-tRNA synthetase family. Type 1 subfamily. Homodimer.

The protein resides in the cytoplasm. It carries out the reaction tRNA(Asx) + L-aspartate + ATP = L-aspartyl-tRNA(Asx) + AMP + diphosphate. Functionally, aspartyl-tRNA synthetase with relaxed tRNA specificity since it is able to aspartylate not only its cognate tRNA(Asp) but also tRNA(Asn). Reaction proceeds in two steps: L-aspartate is first activated by ATP to form Asp-AMP and then transferred to the acceptor end of tRNA(Asp/Asn). In Helicobacter pylori (strain Shi470), this protein is Aspartate--tRNA(Asp/Asn) ligase.